A 153-amino-acid chain; its full sequence is 6,7-dimethyl-8-ribityllumazine synthase (153 aa).

5-amino-6-(D-ribitylamino)uracil contacts are provided by residues F22, 56–58 (AFE), and 80–82 (TVI). Residue 85–86 (ST) coordinates (2S)-2-hydroxy-3-oxobutyl phosphate. Residue H88 is the Proton donor of the active site. Residue F113 participates in 5-amino-6-(D-ribitylamino)uracil binding. R127 lines the (2S)-2-hydroxy-3-oxobutyl phosphate pocket.

It belongs to the DMRL synthase family. As to quaternary structure, forms an icosahedral capsid composed of 60 subunits, arranged as a dodecamer of pentamers.

It catalyses the reaction (2S)-2-hydroxy-3-oxobutyl phosphate + 5-amino-6-(D-ribitylamino)uracil = 6,7-dimethyl-8-(1-D-ribityl)lumazine + phosphate + 2 H2O + H(+). It participates in cofactor biosynthesis; riboflavin biosynthesis; riboflavin from 2-hydroxy-3-oxobutyl phosphate and 5-amino-6-(D-ribitylamino)uracil: step 1/2. In terms of biological role, catalyzes the formation of 6,7-dimethyl-8-ribityllumazine by condensation of 5-amino-6-(D-ribitylamino)uracil with 3,4-dihydroxy-2-butanone 4-phosphate. This is the penultimate step in the biosynthesis of riboflavin. The protein is 6,7-dimethyl-8-ribityllumazine synthase of Actinobacillus pleuropneumoniae serotype 3 (strain JL03).